Consider the following 509-residue polypeptide: uncharacterized protein (509 aa).

13 helical membrane-spanning segments follow: residues 14-34 (SAFT…WVIP), 117-137 (TIEA…IGVI), 158-178 (EFFI…TCGI), 188-208 (ILVP…GAIF), 209-229 (LAAS…VIAS), 240-260 (IGFR…YLYW), 303-323 (LILT…MVGG), 324-344 (WWFP…MFIS), 359-379 (ASEL…NLVL), 399-419 (MPGS…GLIV), 423-443 (SGLA…VGIP), 458-478 (MLFL…QIPF), and 484-504 (FVMP…VVQV).

It to E.coli YfcC. To B.subtilis YcgA.

Its subcellular location is the cell membrane. This is an uncharacterized protein from Haemophilus influenzae (strain ATCC 51907 / DSM 11121 / KW20 / Rd).